The following is a 20-amino-acid chain: Thylakoid lumenal 14.7 kDa protein (20 aa).

The interval 1-20 (KTGVNKPELLPKEETTVIDV) is disordered. Over residues 9–20 (LLPKEETTVIDV) the composition is skewed to basic and acidic residues.

Its subcellular location is the plastid. It is found in the chloroplast thylakoid lumen. In Spinacia oleracea (Spinach), this protein is Thylakoid lumenal 14.7 kDa protein.